A 352-amino-acid chain; its full sequence is Biotin synthase (352 aa).

One can recognise a Radical SAM core domain in the interval 44–262; sequence NRVQVSTLLS…LAVARIMMPK (219 aa). Residues Cys59, Cys63, and Cys66 each coordinate [4Fe-4S] cluster. [2Fe-2S] cluster-binding residues include Cys103, Cys134, Cys194, and Arg266.

Belongs to the radical SAM superfamily. Biotin synthase family. Homodimer. It depends on [4Fe-4S] cluster as a cofactor. [2Fe-2S] cluster is required as a cofactor.

It carries out the reaction (4R,5S)-dethiobiotin + (sulfur carrier)-SH + 2 reduced [2Fe-2S]-[ferredoxin] + 2 S-adenosyl-L-methionine = (sulfur carrier)-H + biotin + 2 5'-deoxyadenosine + 2 L-methionine + 2 oxidized [2Fe-2S]-[ferredoxin]. Its pathway is cofactor biosynthesis; biotin biosynthesis; biotin from 7,8-diaminononanoate: step 2/2. In terms of biological role, catalyzes the conversion of dethiobiotin (DTB) to biotin by the insertion of a sulfur atom into dethiobiotin via a radical-based mechanism. The chain is Biotin synthase from Pseudomonas aeruginosa (strain UCBPP-PA14).